A 72-amino-acid polypeptide reads, in one-letter code: Mitotic-spindle organizing protein 1 (72 aa).

It belongs to the MOZART1 family. In terms of assembly, part of the gamma-tubulin complex.

Its subcellular location is the cytoplasm. It localises to the cytoskeleton. The protein localises to the microtubule organizing center. It is found in the centrosome. The protein resides in the spindle. Functionally, required for gamma-tubulin complex recruitment to the centrosome. The chain is Mitotic-spindle organizing protein 1 (mzt1) from Xenopus laevis (African clawed frog).